The primary structure comprises 134 residues: Acyl carrier protein, chloroplastic (134 aa).

The transit peptide at 1 to 51 directs the protein to the chloroplast; it reads MATTFSASVSTLATSLATPTRISFQKPALVSRTNLSFNLRRSIPTRLSVSC. A Carrier domain is found at 55–130; the sequence is PETIEKVSKI…EAAELIEELV (76 aa). Ser-90 carries the post-translational modification O-(pantetheine 4'-phosphoryl)serine.

The protein belongs to the acyl carrier protein (ACP) family. In terms of processing, 4'-phosphopantetheine is transferred from CoA to a specific serine of apo-ACP by acpS. This modification is essential for activity because fatty acids are bound in thioester linkage to the sulfhydryl of the prosthetic group. In terms of tissue distribution, seed.

The protein resides in the plastid. The protein localises to the chloroplast. It participates in lipid metabolism; fatty acid biosynthesis. Its function is as follows. Carrier of the growing fatty acid chain in fatty acid biosynthesis. The sequence is that of Acyl carrier protein, chloroplastic (ACL1.A3) from Brassica napus (Rape).